Here is a 612-residue protein sequence, read N- to C-terminus: uncharacterized protein (612 aa).

Disordered regions lie at residues 46-113 (QQPQ…MVTP), 129-185 (QQYQ…TPTY), 313-360 (TKDG…GSTM), 457-488 (FSIS…SGYG), and 593-612 (NNTN…VVTI). A compositionally biased stretch (low complexity) spans 58–102 (HQQIPISTQSTPNSTSSTTTTTTTTTSTTTAPTSNSKKSKTTPSN). Composition is skewed to polar residues over residues 103-113 (GNKPTSGMVTP) and 129-138 (QQYQPNSQLQ). A compositionally biased stretch (low complexity) spans 143–169 (IIKKSSLSTTPNNINNNNNNNNNTNTI). A compositionally biased stretch (polar residues) spans 175–185 (GGNNSAPTPTY). The segment covering 323–359 (TTSSTSTSSSATSTTSSSTSSTTTTSSTSNSSTPGST) has biased composition (low complexity).

This is an uncharacterized protein from Dictyostelium discoideum (Social amoeba).